A 354-amino-acid chain; its full sequence is S-adenosylmethionine:tRNA ribosyltransferase-isomerase (354 aa).

The protein belongs to the QueA family. Monomer.

It is found in the cytoplasm. The catalysed reaction is 7-aminomethyl-7-carbaguanosine(34) in tRNA + S-adenosyl-L-methionine = epoxyqueuosine(34) in tRNA + adenine + L-methionine + 2 H(+). Its pathway is tRNA modification; tRNA-queuosine biosynthesis. In terms of biological role, transfers and isomerizes the ribose moiety from AdoMet to the 7-aminomethyl group of 7-deazaguanine (preQ1-tRNA) to give epoxyqueuosine (oQ-tRNA). This is S-adenosylmethionine:tRNA ribosyltransferase-isomerase from Klebsiella pneumoniae (strain 342).